The following is a 1463-amino-acid chain: Probable oxidoreductase PXDNL (1463 aa).

Residues 1-23 (MEPRLFCWTTLFLLAGWCLPGLP) form the signal peptide. The LRRNT domain occupies 24–50 (CPSRCLCFKSTVRCMHLMLDHIPQVPQ). LRR repeat units follow at residues 51-72 (QTTVLDLRFNRIREIPGSAFKK), 75-96 (NLNTLLLNNNHIRKISRNAFEG), 99-120 (NLLYLYLYKNEIHALDKQTFKG), 123-144 (SLEHLYIHFNQLEMLQPETFGD), and 147-168 (RLERLFLHNNKLSKIPAGSFSN). In terms of domain architecture, LRRCT spans 180–233 (NALVCDCDLMWLGELLQGFAQHGHTQAAATCEYPRRLHGRAVASVTVEEFNCQS). Ig-like C2-type domains lie at 234-322 (PRIT…AMLR), 330-414 (PSFV…ANII), 419-504 (PQFT…VQLT), and 507-596 (PKAL…MFLT). Disulfide bonds link cysteine 255-cysteine 305, cysteine 351-cysteine 398, cysteine 440-cysteine 488, cysteine 532-cysteine 580, and cysteine 718-cysteine 734. A glycan (N-linked (GlcNAc...) asparagine) is linked at asparagine 387. Histidine 812 acts as the Proton acceptor in catalysis. Aspartate 813 contacts Ca(2+). 2 disulfides stabilise this stretch: cysteine 832–cysteine 842 and cysteine 836–cysteine 859. Residues threonine 891, tyrosine 893, aspartate 895, and serine 897 each contribute to the Ca(2+) site. Cysteine 944 and cysteine 953 are joined by a disulfide. Histidine 1057 is a heme b binding site. Intrachain disulfides connect cysteine 1160–cysteine 1217 and cysteine 1258–cysteine 1284. Residues 1393 to 1451 (AGCTDVRGVPRKAEERWMKEDCTHCICESGQVTCVVEICPPAPCPSPELVKGTCCPVCR) form the VWFC domain.

Belongs to the peroxidase family. XPO subfamily. As to quaternary structure, interacts with PXDN; this interaction inhibits the peroxidase activity of PXDN. Heme b is required as a cofactor. Phosphorylation by SRC on tyrosine residues is required for targeting to polysomes. The 57 kDa isoform PMR1 is the only form detected at protein levels in human cell lines. Expressed in heart.

It is found in the secreted. The protein localises to the endoplasmic reticulum. The protein resides in the cell membrane. Its subcellular location is the cytoplasm. In terms of biological role, probable oxidoreductase. Lacks peroxidase activity. Inhibits the peroxidase activity of PXDN through its interaction. Its function is as follows. Endonuclease selectively degrading some target mRNAs while they are engaged by translating ribosomes, among which albumin and beta-globin mRNAs. The polypeptide is Probable oxidoreductase PXDNL (Homo sapiens (Human)).